The sequence spans 904 residues: Auxilin-related protein 1 (904 aa).

Disordered stretches follow at residues 46–99 (AAGK…FDYD), 150–731 (SSIS…NLRK), and 749–776 (SASQSGGFQDVDGETEERRRARLERHQR). The segment covering 59-69 (DPGRDGDDLLF) has biased composition (basic and acidic residues). Residues 81–95 (YGSSSGDSRSPSAPA) are compositionally biased toward low complexity. Over residues 178–188 (KGADSDREEKG) the composition is skewed to basic and acidic residues. The segment covering 201 to 215 (RTSSPPSKRTTSETT) has biased composition (low complexity). Positions 232 to 244 (VEEDPFVVLEESE) are enriched in acidic residues. Residues 245 to 271 (STPREPSRTDPLDDIGKFNSRKTDHSS) show a composition bias toward basic and acidic residues. Over residues 370-383 (SAPPPTRPPPPRPT) the composition is skewed to pro residues. Polar residues predominate over residues 394 to 419 (SIPTSAYHSHVPSSGRASVNSPTASQ). Residues 456–663 (SAAAMKDAMD…AAAEARGRAA (208 aa)) are a coiled coil. Composition is skewed to basic and acidic residues over residues 462–570 (DAMD…EAHA) and 581–660 (TDAR…EARG). The R domain maps to 619–640 (REKAEKAAAEAKERANAEAREK). Positions 661-673 (RAAAQAKAKQQQE) are enriched in low complexity. Over residues 674–697 (NTNDLDSFFSSISRPNSAPRQRTN) the composition is skewed to polar residues. Residues 762-804 (ETEERRRARLERHQRTQERAAKALAEKNERDLQVQREQVEKDR) are a coiled coil. Over residues 764–776 (EERRRARLERHQR) the composition is skewed to basic and acidic residues. The 66-residue stretch at 839 to 904 (CGWQPVSLTD…WNKFNSEELF (66 aa)) folds into the J domain.

As to quaternary structure, interacts with SH3P1.

It is found in the cell membrane. Its subcellular location is the golgi apparatus. It localises to the trans-Golgi network. The protein resides in the endoplasmic reticulum. The protein localises to the cytoplasmic vesicle. Functionally, promotes uncoating of clathrin-coated vesicles. May interact directly with clathrin. In Arabidopsis thaliana (Mouse-ear cress), this protein is Auxilin-related protein 1.